A 245-amino-acid polypeptide reads, in one-letter code: Ribosomal RNA small subunit methyltransferase G (245 aa).

S-adenosyl-L-methionine contacts are provided by residues Gly90, Leu95, 140-141, and Arg158; that span reads AE.

This sequence belongs to the methyltransferase superfamily. RNA methyltransferase RsmG family.

It is found in the cytoplasm. Functionally, specifically methylates the N7 position of guanine in position 518 of 16S rRNA. The polypeptide is Ribosomal RNA small subunit methyltransferase G (Mycobacterium leprae (strain TN)).